The chain runs to 143 residues: CRISPR-associated endoribonuclease Cas2 (143 aa).

Mg(2+) is bound at residue Asp14.

It belongs to the CRISPR-associated endoribonuclease Cas2 protein family. In terms of assembly, homodimer, forms a heterotetramer with a Cas1 homodimer. The cofactor is Mg(2+).

Its function is as follows. CRISPR (clustered regularly interspaced short palindromic repeat), is an adaptive immune system that provides protection against mobile genetic elements (viruses, transposable elements and conjugative plasmids). CRISPR clusters contain sequences complementary to antecedent mobile elements and target invading nucleic acids. CRISPR clusters are transcribed and processed into CRISPR RNA (crRNA). Functions as a ssRNA-specific endoribonuclease. Involved in the integration of spacer DNA into the CRISPR cassette. This Campylobacter jejuni subsp. jejuni serotype O:2 (strain ATCC 700819 / NCTC 11168) protein is CRISPR-associated endoribonuclease Cas2.